The sequence spans 87 residues: U3-theraphotoxin-Hhn1h (87 aa).

The first 24 residues, 1-24 (MVNMKASMFLTFAGLVLLFVVCYA), serve as a signal peptide directing secretion. The propeptide occupies 25–52 (SESEEKEFPKEMLSSIFAVDNDSKQEER). 3 disulfide bridges follow: Cys54-Cys67, Cys61-Cys72, and Cys66-Cys79.

It belongs to the neurotoxin 10 (Hwtx-1) family. 51 (Hntx-8) subfamily. Hntx-8 sub-subfamily. In terms of tissue distribution, expressed by the venom gland.

It localises to the secreted. In terms of biological role, ion channel inhibitor. This chain is U3-theraphotoxin-Hhn1h, found in Cyriopagopus hainanus (Chinese bird spider).